Reading from the N-terminus, the 139-residue chain is D-ribose pyranase (139 aa).

The active-site Proton donor is the H20. Substrate contacts are provided by residues D28, H106, and 128-130 (YAN).

Belongs to the RbsD / FucU family. RbsD subfamily. As to quaternary structure, homodecamer.

Its subcellular location is the cytoplasm. It catalyses the reaction beta-D-ribopyranose = beta-D-ribofuranose. The protein operates within carbohydrate metabolism; D-ribose degradation; D-ribose 5-phosphate from beta-D-ribopyranose: step 1/2. Functionally, catalyzes the interconversion of beta-pyran and beta-furan forms of D-ribose. In Aliivibrio fischeri (strain ATCC 700601 / ES114) (Vibrio fischeri), this protein is D-ribose pyranase.